Consider the following 176-residue polypeptide: Peptide deformylase (176 aa).

The Fe cation site is built by Cys95 and His137. Residue Glu138 is part of the active site. His141 lines the Fe cation pocket.

It belongs to the polypeptide deformylase family. The cofactor is Fe(2+).

It carries out the reaction N-terminal N-formyl-L-methionyl-[peptide] + H2O = N-terminal L-methionyl-[peptide] + formate. Functionally, removes the formyl group from the N-terminal Met of newly synthesized proteins. Requires at least a dipeptide for an efficient rate of reaction. N-terminal L-methionine is a prerequisite for activity but the enzyme has broad specificity at other positions. This chain is Peptide deformylase, found in Hyphomonas neptunium (strain ATCC 15444).